Consider the following 296-residue polypeptide: Tyrosine recombinase XerC (296 aa).

Positions 2–85 (ADQASWLERF…ALKQFGQFLL (84 aa)) constitute a Core-binding (CB) domain. One can recognise a Tyr recombinase domain in the interval 106 to 285 (TLPKNLDPDS…DFQHLAKVYD (180 aa)). Residues Arg145, Lys169, His237, Arg240, and His263 contribute to the active site. The O-(3'-phospho-DNA)-tyrosine intermediate role is filled by Tyr272.

This sequence belongs to the 'phage' integrase family. XerC subfamily. As to quaternary structure, forms a cyclic heterotetrameric complex composed of two molecules of XerC and two molecules of XerD.

The protein localises to the cytoplasm. Site-specific tyrosine recombinase, which acts by catalyzing the cutting and rejoining of the recombining DNA molecules. The XerC-XerD complex is essential to convert dimers of the bacterial chromosome into monomers to permit their segregation at cell division. It also contributes to the segregational stability of plasmids. This Shewanella amazonensis (strain ATCC BAA-1098 / SB2B) protein is Tyrosine recombinase XerC.